Consider the following 324-residue polypeptide: Envelope protein H3 (324 aa).

The Virion surface segment spans residues 1–284 (MAAVKTPVIV…FTTPLISFFG (284 aa)). Residues 285 to 305 (LFDINVIGLIVILFIMFMLIF) traverse the membrane as a helical; Signal-anchor segment. Residues 306-324 (NVKSKLLWFLTGTFVTAFI) are Intravirion-facing.

The protein belongs to the orthopoxvirus OPG108 family. Does not contain disulfide bonds.

It is found in the virion membrane. In terms of biological role, envelope protein that binds to heparan sulfate on the cell surface and might provide virion attachment to target cell. This is Envelope protein H3 (OPG108) from Homo sapiens (Human).